The primary structure comprises 510 residues: ATP synthase subunit alpha, mitochondrial (510 aa).

171 to 178 (GDRQTGKT) serves as a coordination point for ATP.

As to quaternary structure, F-type ATP synthases have 2 components, the catalytic core F(1) and the membrane-embedded component F(0), linked together by a central stalk and a peripheral stalk. The central stalk, also called rotor shaft, is often seen as part of F(1). The peripheral stalk is seen as part of F(0). F(0) contains the membrane channel next to the rotor. F-type ATP synthases form dimers but each monomer functions independently in ATP generation. The dimer consists of 18 different polypeptides: ATP1 (subunit alpha, part of F(1), 3 molecules per monomer), ATP2 (subunit beta, part of F(1), 3 molecules per monomer), ATP3 (subunit gamma, part of the central stalk), ATP4 (subunit b, part of the peripheral stalk), ATP5/OSCP (subunit 5/OSCP, part of the peripheral stalk), ATP6 (subunit a, part of the peripheral stalk), ATP7 (subunit d, part of the peripheral stalk), ATP8 (subunit 8, part of the peripheral stalk), OLI1 (subunit c, part of the rotor, 10 molecules per monomer), ATP14 (subunit h, part of the peripheral stalk), ATP15 (subunit epsilon, part of the central stalk), ATP16 (subunit delta, part of the central stalk), ATP17 (subunit f, part of the peripheral stalk), ATP18 (subunit i/j, part of the peripheral stalk). Dimer-specific subunits are ATP19 (subunit k, at interface between monomers), ATP20 (subunit g, at interface between monomers), TIM11 (subunit e, at interface between monomers). Also contains subunit L.

It is found in the mitochondrion inner membrane. Its function is as follows. Mitochondrial membrane ATP synthase (F(1)F(0) ATP synthase or Complex V) produces ATP from ADP in the presence of a proton gradient across the membrane which is generated by electron transport complexes of the respiratory chain. F-type ATP synthases consist of two structural domains, F(1) - containing the extramembraneous catalytic core, and F(0) - containing the membrane proton channel, linked together by a central stalk and a peripheral stalk. During catalysis, ATP synthesis in the catalytic domain of F(1) is coupled via a rotary mechanism of the central stalk subunits to proton translocation. Subunits alpha/ATP1 and beta/ATP2 form the catalytic core in F(1). Rotation of the central stalk against the surrounding alpha/ATP1(3)beta/ATP2(3) subunits leads to hydrolysis of ATP in three separate catalytic sites on the beta/ATP2 subunits. Subunit alpha/ATP1 does not bear the catalytic high-affinity ATP-binding sites. The chain is ATP synthase subunit alpha, mitochondrial from Pichia angusta (Yeast).